A 71-amino-acid chain; its full sequence is Large ribosomal subunit protein bL31 (71 aa).

Residues cysteine 16, cysteine 18, cysteine 37, and cysteine 40 each contribute to the Zn(2+) site.

The protein belongs to the bacterial ribosomal protein bL31 family. Type A subfamily. Part of the 50S ribosomal subunit. Zn(2+) serves as cofactor.

Its function is as follows. Binds the 23S rRNA. This is Large ribosomal subunit protein bL31 from Sodalis glossinidius (strain morsitans).